Consider the following 494-residue polypeptide: Glycerol kinase (494 aa).

ADP is bound at residue Thr13. The ATP site is built by Thr13, Thr14, and Ser15. Thr13 contributes to the sn-glycerol 3-phosphate binding site. Arg17 contributes to the ADP binding site. Positions 83, 84, 135, and 244 each coordinate sn-glycerol 3-phosphate. Glycerol-binding residues include Arg83, Glu84, Tyr135, Asp244, and Gln245. 2 residues coordinate ADP: Thr266 and Gly309. ATP-binding residues include Thr266, Gly309, Gln313, and Gly410. Gly410 and Asn414 together coordinate ADP.

This sequence belongs to the FGGY kinase family.

It catalyses the reaction glycerol + ATP = sn-glycerol 3-phosphate + ADP + H(+). It functions in the pathway polyol metabolism; glycerol degradation via glycerol kinase pathway; sn-glycerol 3-phosphate from glycerol: step 1/1. Its activity is regulated as follows. Inhibited by fructose 1,6-bisphosphate (FBP). Functionally, key enzyme in the regulation of glycerol uptake and metabolism. Catalyzes the phosphorylation of glycerol to yield sn-glycerol 3-phosphate. The protein is Glycerol kinase of Shewanella sp. (strain MR-7).